The primary structure comprises 114 residues: Notch-regulated ankyrin repeat-containing protein (114 aa).

ANK repeat units lie at residues 50–79 (EGQT…DIRL) and 83–112 (DGWS…YAAS).

The protein belongs to the NRARP family. In terms of assembly, interacts with LEF1.

In terms of biological role, downstream effector of Notch signaling. Involved in the regulation of liver cancer cells self-renewal. Involved in angiogenesis acting downstream of Notch at branch points to regulate vascular density. Proposed to integrate endothelial Notch and Wnt signaling to control stalk cell proliferation and to stablilize new endothelial connections during angiogenesis. During somitogenesis involved in maintenance of proper somite segmentation and proper numbers of somites and vertebrae. Required for proper anterior-posterior somite patterning. Proposed to function in a negative feedback loop to destabilize Notch 1 intracellular domain (NICD) and down-regulate the Notch signal, preventing expansion of the Notch signal into the anterior somite domain. This is Notch-regulated ankyrin repeat-containing protein (NRARP) from Homo sapiens (Human).